The primary structure comprises 397 residues: MSKEKFERTKPHVNIGTIGHVDHGKTTLTAAITMVLAKEGKASATKYDEIDKAPEEKERGITINTAHVEYETEVRHYAHVDCPGHADYVKNMITGAAQMDGAILVVSAADGPMPQTREHILLASRVGVQYIVVFLNKSDQVDDPELIELVEMEVRELLSEYGFPGDDVPIIVGSALKVIENPEDAEATKCIYELMEAVDTYIPTPERPVDKPFLMPIEDVFTITGRGTVATGRVESGVLKIGDEVEIVGLKEEKKKTVCTGVEMFRKLLDQAMAGDNIGALLRGIQREEIERGQVLSKPGSVKPHKKFVGQVYVLKKEEGGRHTPFFNGYRPQFYFRTTDVTGSISLPEGVEMVMPGDHIDMNVELITPVAMHEGLRFAIREGGRTVGSGVVTTVSE.

The region spanning 10–206 (KPHVNIGTIG…AVDTYIPTPE (197 aa)) is the tr-type G domain. Residues 19 to 26 (GHVDHGKT) are G1. Residue 19–26 (GHVDHGKT) participates in GTP binding. T26 lines the Mg(2+) pocket. Positions 60-64 (GITIN) are G2. Residues 81 to 84 (DCPG) are G3. Residues 81–85 (DCPGH) and 136–139 (NKSD) contribute to the GTP site. Residues 136–139 (NKSD) are G4. The interval 174–176 (SAL) is G5.

This sequence belongs to the TRAFAC class translation factor GTPase superfamily. Classic translation factor GTPase family. EF-Tu/EF-1A subfamily. Monomer.

Its subcellular location is the cytoplasm. The catalysed reaction is GTP + H2O = GDP + phosphate + H(+). In terms of biological role, GTP hydrolase that promotes the GTP-dependent binding of aminoacyl-tRNA to the A-site of ribosomes during protein biosynthesis. This Clostridium kluyveri (strain ATCC 8527 / DSM 555 / NBRC 12016 / NCIMB 10680 / K1) protein is Elongation factor Tu.